The following is a 287-amino-acid chain: ATP synthase gamma chain (287 aa).

Belongs to the ATPase gamma chain family. In terms of assembly, F-type ATPases have 2 components, CF(1) - the catalytic core - and CF(0) - the membrane proton channel. CF(1) has five subunits: alpha(3), beta(3), gamma(1), delta(1), epsilon(1). CF(0) has three main subunits: a, b and c.

The protein resides in the cell inner membrane. In terms of biological role, produces ATP from ADP in the presence of a proton gradient across the membrane. The gamma chain is believed to be important in regulating ATPase activity and the flow of protons through the CF(0) complex. The polypeptide is ATP synthase gamma chain (Shigella boydii serotype 4 (strain Sb227)).